Consider the following 58-residue polypeptide: UPF0391 membrane protein Maqu_2901 (58 aa).

The next 2 membrane-spanning stretches (helical) occupy residues 4 to 24 (WAIV…GGIA) and 28 to 48 (AGFA…SLVV).

Belongs to the UPF0391 family.

The protein localises to the cell membrane. The chain is UPF0391 membrane protein Maqu_2901 from Marinobacter nauticus (strain ATCC 700491 / DSM 11845 / VT8) (Marinobacter aquaeolei).